We begin with the raw amino-acid sequence, 359 residues long: MQSTPLNFVPNAAKAPVTPGQAPDARWSREAIEALFALPFNDLLFQAQQVHRANFDANAVQLSTLLSIKTGGCPEDCSYCPQSARYDTGVEAEKLMPIDAVLEAASRAKQNGASRFCMGAAWRNPKPHQLDAVADMVRGVKAMGLETCVTLGMLKQEQAAQLKEAGLDYYNHNLDTAPEFYGEIITTRTYQDRLDTLEHVRDAGINVCCGGIVGLGESVHERAGLIAELANMEPYPDSVPINNLVKVEGTPLAGNEELDPFDFVRTIAVARITMPKAMVRLSAGREAMDDALQALCFMAGANSIFYGEKLLTTDNPEADADRKLLARLGMRVEVQDHMHHESHVGAQSSHCHIDITPAD.

The disordered stretch occupies residues 1 to 22 (MQSTPLNFVPNAAKAPVTPGQA). Residues 58–285 (NAVQLSTLLS…KAMVRLSAGR (228 aa)) form the Radical SAM core domain. [4Fe-4S] cluster contacts are provided by Cys-73, Cys-77, and Cys-80. Residues Cys-117, Cys-148, Cys-208, and Arg-280 each contribute to the [2Fe-2S] cluster site.

Belongs to the radical SAM superfamily. Biotin synthase family. In terms of assembly, homodimer. [4Fe-4S] cluster is required as a cofactor. The cofactor is [2Fe-2S] cluster.

The catalysed reaction is (4R,5S)-dethiobiotin + (sulfur carrier)-SH + 2 reduced [2Fe-2S]-[ferredoxin] + 2 S-adenosyl-L-methionine = (sulfur carrier)-H + biotin + 2 5'-deoxyadenosine + 2 L-methionine + 2 oxidized [2Fe-2S]-[ferredoxin]. It functions in the pathway cofactor biosynthesis; biotin biosynthesis; biotin from 7,8-diaminononanoate: step 2/2. Its function is as follows. Catalyzes the conversion of dethiobiotin (DTB) to biotin by the insertion of a sulfur atom into dethiobiotin via a radical-based mechanism. The protein is Biotin synthase of Ralstonia pickettii (strain 12J).